The primary structure comprises 852 residues: Patatin-like phospholipase domain-containing protein CaO19.1504 (852 aa).

Over residues 41 to 52 the composition is skewed to low complexity; the sequence is ATTDITTTPIND. A disordered region spans residues 41–184; it reads ATTDITTTPI…KKTTPTSSTS (144 aa). Positions 75–95 are enriched in polar residues; it reads INGTVSDSSSITDEDIMNSSY. Residues 101-110 show a composition bias toward low complexity; the sequence is SSTNLKSNST. Over residues 113 to 122 the composition is skewed to acidic residues; the sequence is DDDDDDDDDD. Low complexity-rich tracts occupy residues 129-142 and 158-171; these read SGTTDNTSTTSLSS and GGSRSSSSSKKGSS. The helical transmembrane segment at 207 to 227 threads the bilayer; it reads WPILIFVFSWIGILGIFYFMI. In terms of domain architecture, PNPLA spans 396 to 588; that stretch reads LCLSGGACFA…RTDIPIEALN (193 aa). The GXSXG signature appears at 427–431; the sequence is GTSGG. Serine 429 (nucleophile) is an active-site residue. Aspartate 575 (proton acceptor) is an active-site residue. The segment at 800–840 is disordered; it reads KKLLDELDNEDEEEDEEEEEVDVDDDDDDDDDSLSDSFEIT. Residues 805–833 are compositionally biased toward acidic residues; it reads ELDNEDEEEDEEEEEVDVDDDDDDDDDSL.

The protein belongs to the PLPL family.

It is found in the membrane. Its function is as follows. Probable lipid hydrolase. The chain is Patatin-like phospholipase domain-containing protein CaO19.1504 from Candida albicans (strain SC5314 / ATCC MYA-2876) (Yeast).